Consider the following 417-residue polypeptide: UDP-N-acetylglucosamine 1-carboxyvinyltransferase (417 aa).

Residue K22–N23 coordinates phosphoenolpyruvate. Residue R92 coordinates UDP-N-acetyl-alpha-D-glucosamine. Catalysis depends on C116, which acts as the Proton donor. C116 is modified (2-(S-cysteinyl)pyruvic acid O-phosphothioketal). Residues K161–V164, D305, and I327 contribute to the UDP-N-acetyl-alpha-D-glucosamine site.

Belongs to the EPSP synthase family. MurA subfamily.

It localises to the cytoplasm. It catalyses the reaction phosphoenolpyruvate + UDP-N-acetyl-alpha-D-glucosamine = UDP-N-acetyl-3-O-(1-carboxyvinyl)-alpha-D-glucosamine + phosphate. Its pathway is cell wall biogenesis; peptidoglycan biosynthesis. In terms of biological role, cell wall formation. Adds enolpyruvyl to UDP-N-acetylglucosamine. In Pelagibacter ubique (strain HTCC1062), this protein is UDP-N-acetylglucosamine 1-carboxyvinyltransferase.